Consider the following 409-residue polypeptide: Regulator of Ty1 transposition protein 103 (409 aa).

In terms of domain architecture, CID spans 1–135 (MPFSSEQFTT…DIERSLKTES (135 aa)). A disordered region spans residues 250-409 (LNKNVDEDNI…IQDLLSKLAN (160 aa)). Over residues 266-289 (GDGDDDDDDGDNDDDDDDDDDDKN) the composition is skewed to acidic residues. 3 stretches are compositionally biased toward basic and acidic residues: residues 307-323 (TDKKNEVVEKTDSEHKN), 337-363 (RTHDMIGHDDANDIPEKKVHLDSKTSE), and 370-380 (EDGHYELDIEG).

The protein belongs to the UPF0400 (RTT103) family. As to quaternary structure, interacts with PCF11, RAI1, RAT1, RPO21 and RBP2.

It is found in the nucleus. Its function is as follows. Involved in transcription termination by RNA polymerase II and in regulation of Ty1 transposition. In Saccharomyces cerevisiae (strain ATCC 204508 / S288c) (Baker's yeast), this protein is Regulator of Ty1 transposition protein 103 (RTT103).